Here is a 470-residue protein sequence, read N- to C-terminus: Sorting nexin-17 (470 aa).

Positions 1 to 109 (MHFSIPETES…SFLRRAQQET (109 aa)) constitute a PX domain. A 1,2-diacyl-sn-glycero-3-phospho-(1D-myo-inositol-3-phosphate)-binding residues include Arg-36, Ser-38, Lys-62, and Arg-75. Positions 115–206 (EEVSLEVLLS…YKIVLRKSYW (92 aa)) constitute a Ras-associating domain. Positions 115 to 432 (EEVSLEVLLS…DATRESMVKL (318 aa)) are FERM-like. Residues 270–432 (GYLRFDACVA…DATRESMVKL (163 aa)) are PTB-like F3 module. 7 positions are modified to phosphoserine: Ser-336, Ser-407, Ser-409, Ser-415, Ser-421, Ser-437, and Ser-440. The segment at 401–426 (GGTLRRSDSQQAVKSPPLLESPDATR) is disordered. The interacts with the retriever complex stretch occupies residues 458–470 (GNFAFEGIGDEDL).

This sequence belongs to the sorting nexin family. In terms of assembly, monomer. Interacts with APP (via cytoplasmic YXNPXY motif). Interacts with KIF1B. Interacts with the C-termini of P-selectin, PTC, LDLR, VLDLR, LRP1 and LRP8. Interacts with KRIT1 (via N-terminus). Interacts with HRAS. Interacts with ITGB1 and ITGB5 (via NPxY motif). Interacts with CCDC22 and CCDC93; the interaction associates SNX17 with the CCC complex. Interacts (via C-terminus) with VPS26C and VPS35L; the interactions are direct and associate SNX17 with the retriever complex.

The protein resides in the cytoplasm. Its subcellular location is the early endosome. The protein localises to the cytoplasmic vesicle membrane. Critical regulator of endosomal recycling of numerous surface proteins, including integrins, signaling receptor and channels. Binds to NPxY sequences in the cytoplasmic tails of target cargos. Associates with retriever and CCC complexes to prevent lysosomal degradation and promote cell surface recycling of numerous cargos such as integrins ITGB1, ITGB5 and their associated alpha subunits. Also required for maintenance of normal cell surface levels of APP and LRP1. Interacts with membranes containing phosphatidylinositol 3-phosphate (PtdIns(3P)). In Homo sapiens (Human), this protein is Sorting nexin-17 (SNX17).